The chain runs to 105 residues: Diuretic hormone class 2 (105 aa).

Positions 1 to 23 are cleaved as a signal peptide; the sequence is MTVLCTLMAFVMVVAISSLTVDA. Positions 24 to 63 are excised as a propeptide; sequence IPHSHESYWDQQDDIDRDEFLELLSRLSRTVMNRPEMENS. The residue at position 96 (Pro-96) is a Proline amide. The propeptide occupies 101-105; it reads RSEQA.

Expressed in central brain, antennal lobes, retrocerebral complex and gnathal, thoracic and abdominal ganglia but not in optical lobes (at protein level).

It localises to the secreted. Regulation of fluid secretion. Stimulates Malpighian tubules fluid secretion. The chain is Diuretic hormone class 2 from Camponotus floridanus (Florida carpenter ant).